The primary structure comprises 169 residues: Cytochrome c oxidase subunit 4 isoform 1, mitochondrial (169 aa).

The transit peptide at 1-22 (MLATRVFSLIGRRAISTSVCVR) directs the protein to the mitochondrion. The Mitochondrial matrix segment spans residues 23–98 (AHGSVVKSED…SFAEMNRSTN (76 aa)). N6-acetyllysine; alternate is present on K29. At K29 the chain carries N6-succinyllysine; alternate. K53 bears the N6-acetyllysine mark. 2 positions are modified to phosphoserine: S56 and S58. N6-acetyllysine; alternate is present on K60. K60 is modified (N6-succinyllysine; alternate). N6-acetyllysine is present on K67. A helical transmembrane segment spans residues 99 to 124 (EWKTVVGAAMFFIGFTALLLIWEKHY). Residues 125–169 (VYGPIPHTFEEEWVAKQTKRMLDMKVAPIQGFSAKWDYDKNEWKK) are Mitochondrial intermembrane-facing.

This sequence belongs to the cytochrome c oxidase IV family. As to quaternary structure, component of the cytochrome c oxidase (complex IV, CIV), a multisubunit enzyme composed of 14 subunits. The complex is composed of a catalytic core of 3 subunits MT-CO1, MT-CO2 and MT-CO3, encoded in the mitochondrial DNA, and 11 supernumerary subunits COX4I1 (or COX4I2), COX5A, COX5B, COX6A2 (or COX6A1), COX6B1 (or COX6B2), COX6C, COX7A1 (or COX7A2), COX7B, COX7C, COX8B and NDUFA4, which are encoded in the nuclear genome. The complex exists as a monomer or a dimer and forms supercomplexes (SCs) in the inner mitochondrial membrane with NADH-ubiquinone oxidoreductase (complex I, CI) and ubiquinol-cytochrome c oxidoreductase (cytochrome b-c1 complex, complex III, CIII), resulting in different assemblies (supercomplex SCI(1)III(2)IV(1) and megacomplex MCI(2)III(2)IV(2)). Interacts with PHB2; the interaction decreases in absence of SPHK2. Interacts with AFG1L. Interacts with ABCB7; this interaction allows the regulation of cellular iron homeostasis and cellular reactive oxygen species (ROS) levels in cardiomyocytes. Interacts with FLVCR2; this interaction occurs in the absence of heme and is disrupted upon heme binding. Interacts with IRGC.

Its subcellular location is the mitochondrion inner membrane. It participates in energy metabolism; oxidative phosphorylation. Functionally, component of the cytochrome c oxidase, the last enzyme in the mitochondrial electron transport chain which drives oxidative phosphorylation. The respiratory chain contains 3 multisubunit complexes succinate dehydrogenase (complex II, CII), ubiquinol-cytochrome c oxidoreductase (cytochrome b-c1 complex, complex III, CIII) and cytochrome c oxidase (complex IV, CIV), that cooperate to transfer electrons derived from NADH and succinate to molecular oxygen, creating an electrochemical gradient over the inner membrane that drives transmembrane transport and the ATP synthase. Cytochrome c oxidase is the component of the respiratory chain that catalyzes the reduction of oxygen to water. Electrons originating from reduced cytochrome c in the intermembrane space (IMS) are transferred via the dinuclear copper A center (CU(A)) of subunit 2 and heme A of subunit 1 to the active site in subunit 1, a binuclear center (BNC) formed by heme A3 and copper B (CU(B)). The BNC reduces molecular oxygen to 2 water molecules using 4 electrons from cytochrome c in the IMS and 4 protons from the mitochondrial matrix. The sequence is that of Cytochrome c oxidase subunit 4 isoform 1, mitochondrial (COX4I1) from Bos taurus (Bovine).